The following is a 494-amino-acid chain: Alpha-amylase-related protein (494 aa).

The signal sequence occupies residues 1–20 (MIKFALALTLCLAGASLSLA). A Pyrrolidone carboxylic acid modification is found at Gln21. Residues Cys48 and Cys104 are joined by a disulfide bond. 3 residues coordinate Ca(2+): Asn118, Gln169, and Asp178. Cys157 and Cys171 form a disulfide bridge. Arg206 contacts chloride. Asp208 acts as the Nucleophile in catalysis. His212 contacts Ca(2+). Glu245 functions as the Proton donor in the catalytic mechanism. Asn308 and Arg343 together coordinate chloride. Cystine bridges form between Cys376-Cys382, Cys418-Cys441, and Cys448-Cys460.

Belongs to the glycosyl hydrolase 13 family. In terms of assembly, monomer. Ca(2+) serves as cofactor. It depends on chloride as a cofactor.

Its subcellular location is the secreted. It carries out the reaction Endohydrolysis of (1-&gt;4)-alpha-D-glucosidic linkages in polysaccharides containing three or more (1-&gt;4)-alpha-linked D-glucose units.. The chain is Alpha-amylase-related protein (Amyrel) from Drosophila jambulina (Fruit fly).